The primary structure comprises 377 residues: Homoserine O-succinyltransferase (377 aa).

An AB hydrolase-1 domain is found at 45 to 356 (NAVLVCHALN…PHGHDAFLLD (312 aa)). Catalysis depends on S151, which acts as the Nucleophile. R221 contributes to the substrate binding site. Active-site residues include D317 and H350. Residue D351 coordinates substrate.

Belongs to the AB hydrolase superfamily. MetX family. As to quaternary structure, homodimer.

The protein localises to the cytoplasm. The enzyme catalyses L-homoserine + succinyl-CoA = O-succinyl-L-homoserine + CoA. Its pathway is amino-acid biosynthesis; L-methionine biosynthesis via de novo pathway; O-succinyl-L-homoserine from L-homoserine: step 1/1. Functionally, transfers a succinyl group from succinyl-CoA to L-homoserine, forming succinyl-L-homoserine. This is Homoserine O-succinyltransferase from Leptothrix cholodnii (strain ATCC 51168 / LMG 8142 / SP-6) (Leptothrix discophora (strain SP-6)).